A 301-amino-acid chain; its full sequence is 4-hydroxy-tetrahydrodipicolinate synthase (301 aa).

Residue threonine 55 coordinates pyruvate. Tyrosine 143 acts as the Proton donor/acceptor in catalysis. Residue lysine 171 is the Schiff-base intermediate with substrate of the active site. Isoleucine 213 contacts pyruvate.

It belongs to the DapA family. In terms of assembly, homotetramer; dimer of dimers.

It localises to the cytoplasm. The enzyme catalyses L-aspartate 4-semialdehyde + pyruvate = (2S,4S)-4-hydroxy-2,3,4,5-tetrahydrodipicolinate + H2O + H(+). It participates in amino-acid biosynthesis; L-lysine biosynthesis via DAP pathway; (S)-tetrahydrodipicolinate from L-aspartate: step 3/4. In terms of biological role, catalyzes the condensation of (S)-aspartate-beta-semialdehyde [(S)-ASA] and pyruvate to 4-hydroxy-tetrahydrodipicolinate (HTPA). The chain is 4-hydroxy-tetrahydrodipicolinate synthase from Psychrobacter arcticus (strain DSM 17307 / VKM B-2377 / 273-4).